A 194-amino-acid chain; its full sequence is Molybdenum cofactor guanylyltransferase (194 aa).

Residues 12–14 (LAG), K25, N53, D71, and D101 each bind GTP. D101 contacts Mg(2+).

The protein belongs to the MobA family. As to quaternary structure, monomer. Mg(2+) is required as a cofactor.

Its subcellular location is the cytoplasm. It catalyses the reaction Mo-molybdopterin + GTP + H(+) = Mo-molybdopterin guanine dinucleotide + diphosphate. Functionally, transfers a GMP moiety from GTP to Mo-molybdopterin (Mo-MPT) cofactor (Moco or molybdenum cofactor) to form Mo-molybdopterin guanine dinucleotide (Mo-MGD) cofactor. The polypeptide is Molybdenum cofactor guanylyltransferase (Escherichia coli O157:H7).